The following is a 93-amino-acid chain: Small ribosomal subunit protein uS19 (93 aa).

The protein belongs to the universal ribosomal protein uS19 family.

Its function is as follows. Protein S19 forms a complex with S13 that binds strongly to the 16S ribosomal RNA. The protein is Small ribosomal subunit protein uS19 of Alkaliphilus oremlandii (strain OhILAs) (Clostridium oremlandii (strain OhILAs)).